The chain runs to 371 residues: Queuine tRNA-ribosyltransferase (371 aa).

Asp90 (proton acceptor) is an active-site residue. Residues 90–94, Asp144, Gln188, and Gly215 each bind substrate; that span reads DSGGF. Residues 246 to 252 form an RNA binding region; that stretch reads GVGTPED. Asp265 functions as the Nucleophile in the catalytic mechanism. The segment at 270-274 is RNA binding; important for wobble base 34 recognition; it reads TRNAR. Zn(2+) is bound by residues Cys303, Cys305, Cys308, and His334.

The protein belongs to the queuine tRNA-ribosyltransferase family. Homodimer. Within each dimer, one monomer is responsible for RNA recognition and catalysis, while the other monomer binds to the replacement base PreQ1. Zn(2+) is required as a cofactor.

It carries out the reaction 7-aminomethyl-7-carbaguanine + guanosine(34) in tRNA = 7-aminomethyl-7-carbaguanosine(34) in tRNA + guanine. The protein operates within tRNA modification; tRNA-queuosine biosynthesis. Catalyzes the base-exchange of a guanine (G) residue with the queuine precursor 7-aminomethyl-7-deazaguanine (PreQ1) at position 34 (anticodon wobble position) in tRNAs with GU(N) anticodons (tRNA-Asp, -Asn, -His and -Tyr). Catalysis occurs through a double-displacement mechanism. The nucleophile active site attacks the C1' of nucleotide 34 to detach the guanine base from the RNA, forming a covalent enzyme-RNA intermediate. The proton acceptor active site deprotonates the incoming PreQ1, allowing a nucleophilic attack on the C1' of the ribose to form the product. After dissociation, two additional enzymatic reactions on the tRNA convert PreQ1 to queuine (Q), resulting in the hypermodified nucleoside queuosine (7-(((4,5-cis-dihydroxy-2-cyclopenten-1-yl)amino)methyl)-7-deazaguanosine). The protein is Queuine tRNA-ribosyltransferase of Neisseria meningitidis serogroup A / serotype 4A (strain DSM 15465 / Z2491).